Reading from the N-terminus, the 197-residue chain is Probable GTP-binding protein EngB (197 aa).

Residues 25–197 enclose the EngB-type G domain; that stretch reads SAPEIAFAGR…VRDEFFKFTR (173 aa). Residues 33–40, 60–64, 79–82, 146–149, and 177–179 contribute to the GTP site; these read GRSNVGKS, GCTRQ, DLPG, TKID, and MSI. Residues serine 40 and threonine 62 each coordinate Mg(2+).

The protein belongs to the TRAFAC class TrmE-Era-EngA-EngB-Septin-like GTPase superfamily. EngB GTPase family. Requires Mg(2+) as cofactor.

Its function is as follows. Necessary for normal cell division and for the maintenance of normal septation. The protein is Probable GTP-binding protein EngB of Wolbachia pipientis wMel.